The chain runs to 255 residues: tRNA pseudouridine synthase A (255 aa).

D52 (nucleophile) is an active-site residue. Position 111 (Y111) interacts with substrate.

This sequence belongs to the tRNA pseudouridine synthase TruA family. As to quaternary structure, homodimer.

The catalysed reaction is uridine(38/39/40) in tRNA = pseudouridine(38/39/40) in tRNA. Formation of pseudouridine at positions 38, 39 and 40 in the anticodon stem and loop of transfer RNAs. The sequence is that of tRNA pseudouridine synthase A from Cereibacter sphaeroides (strain KD131 / KCTC 12085) (Rhodobacter sphaeroides).